Reading from the N-terminus, the 155-residue chain is Ribosomal RNA large subunit methyltransferase H (155 aa).

Residues leucine 73, glycine 104, and 123-128 each bind S-adenosyl-L-methionine; that span reads LSPLTL.

This sequence belongs to the RNA methyltransferase RlmH family. As to quaternary structure, homodimer.

The protein localises to the cytoplasm. The catalysed reaction is pseudouridine(1915) in 23S rRNA + S-adenosyl-L-methionine = N(3)-methylpseudouridine(1915) in 23S rRNA + S-adenosyl-L-homocysteine + H(+). Specifically methylates the pseudouridine at position 1915 (m3Psi1915) in 23S rRNA. This chain is Ribosomal RNA large subunit methyltransferase H, found in Pseudomonas putida (strain GB-1).